Here is a 297-residue protein sequence, read N- to C-terminus: Guanylate kinase (297 aa).

A Guanylate kinase-like domain is found at glycine 5–isoleucine 184. Glycine 12–glycine 19 provides a ligand contact to ATP. Residues glutamate 205–aspartate 297 are unknown.

This sequence belongs to the guanylate kinase family.

It is found in the cytoplasm. The catalysed reaction is GMP + ATP = GDP + ADP. Its function is as follows. Essential for recycling GMP and indirectly, cGMP. In Mesoplasma florum (strain ATCC 33453 / NBRC 100688 / NCTC 11704 / L1) (Acholeplasma florum), this protein is Guanylate kinase (gmk).